We begin with the raw amino-acid sequence, 316 residues long: Pantothenate kinase (316 aa).

95–102 serves as a coordination point for ATP; it reads GSVSVGKS.

This sequence belongs to the prokaryotic pantothenate kinase family.

It localises to the cytoplasm. It carries out the reaction (R)-pantothenate + ATP = (R)-4'-phosphopantothenate + ADP + H(+). Its pathway is cofactor biosynthesis; coenzyme A biosynthesis; CoA from (R)-pantothenate: step 1/5. The protein is Pantothenate kinase of Haemophilus ducreyi (strain 35000HP / ATCC 700724).